The primary structure comprises 123 residues: UPF0102 protein APP7_1414 (123 aa).

The protein belongs to the UPF0102 family.

This is UPF0102 protein APP7_1414 from Actinobacillus pleuropneumoniae serotype 7 (strain AP76).